A 342-amino-acid polypeptide reads, in one-letter code: RNA 3'-terminal phosphate cyclase (342 aa).

Residues Gln-100 and 283-287 contribute to the ATP site; that span reads FLGDQ. His-307 functions as the Tele-AMP-histidine intermediate in the catalytic mechanism.

This sequence belongs to the RNA 3'-terminal cyclase family. Type 1 subfamily.

The protein resides in the cytoplasm. It carries out the reaction a 3'-end 3'-phospho-ribonucleotide-RNA + ATP = a 3'-end 2',3'-cyclophospho-ribonucleotide-RNA + AMP + diphosphate. Functionally, catalyzes the conversion of 3'-phosphate to a 2',3'-cyclic phosphodiester at the end of RNA. The mechanism of action of the enzyme occurs in 3 steps: (A) adenylation of the enzyme by ATP; (B) transfer of adenylate to an RNA-N3'P to produce RNA-N3'PP5'A; (C) and attack of the adjacent 2'-hydroxyl on the 3'-phosphorus in the diester linkage to produce the cyclic end product. The biological role of this enzyme is unknown but it is likely to function in some aspects of cellular RNA processing. This is RNA 3'-terminal phosphate cyclase (rtcA) from Pyrococcus abyssi (strain GE5 / Orsay).